Consider the following 192-residue polypeptide: Peptidyl-tRNA hydrolase (192 aa).

His17 contacts tRNA. The active-site Proton acceptor is His22. Residues Phe68, Asn70, and Asn116 each coordinate tRNA.

It belongs to the PTH family. As to quaternary structure, monomer.

It is found in the cytoplasm. It catalyses the reaction an N-acyl-L-alpha-aminoacyl-tRNA + H2O = an N-acyl-L-amino acid + a tRNA + H(+). Hydrolyzes ribosome-free peptidyl-tRNAs (with 1 or more amino acids incorporated), which drop off the ribosome during protein synthesis, or as a result of ribosome stalling. Its function is as follows. Catalyzes the release of premature peptidyl moieties from peptidyl-tRNA molecules trapped in stalled 50S ribosomal subunits, and thus maintains levels of free tRNAs and 50S ribosomes. This is Peptidyl-tRNA hydrolase from Xylella fastidiosa (strain 9a5c).